The chain runs to 342 residues: Protein RecA (342 aa).

Residue 65–72 participates in ATP binding; it reads GPESSGKT.

This sequence belongs to the RecA family.

Its subcellular location is the cytoplasm. Can catalyze the hydrolysis of ATP in the presence of single-stranded DNA, the ATP-dependent uptake of single-stranded DNA by duplex DNA, and the ATP-dependent hybridization of homologous single-stranded DNAs. It interacts with LexA causing its activation and leading to its autocatalytic cleavage. The chain is Protein RecA from Caldanaerobacter subterraneus subsp. tengcongensis (strain DSM 15242 / JCM 11007 / NBRC 100824 / MB4) (Thermoanaerobacter tengcongensis).